The sequence spans 515 residues: Recombining binding protein suppressor of hairless-like protein (515 aa).

The interval 1–40 (MDPRETTDPSLPPGPLTHLSLPDSSEVRLQSDGPSLLGSW) is disordered. 3 DNA-binding regions span residues 76 to 86 (QKSYGNEKRFF), 191 to 196 (SKPSQK), and 218 to 223 (RLRSQT). Residues 384 to 474 (PLISTLELSG…YPSPFSFTYT (91 aa)) enclose the IPT/TIG domain.

It belongs to the Su(H) family. Interacts weakly with EBNA2. Does not interact with any Notch proteins. Highly expressed in lung. Also detected in spleen, and brain.

The protein resides in the nucleus. Functionally, putative transcription factor, which cooperates with EBNA2 to activate transcription. This Mus musculus (Mouse) protein is Recombining binding protein suppressor of hairless-like protein (Rbpjl).